Consider the following 534-residue polypeptide: Light-independent protochlorophyllide reductase subunit B (534 aa).

Asp36 provides a ligand contact to [4Fe-4S] cluster. The Proton donor role is filled by Asp274. Position 409–410 (Gly409–Leu410) interacts with substrate. Residues Asp426–Asp446 form a disordered region.

It belongs to the ChlB/BchB/BchZ family. In terms of assembly, protochlorophyllide reductase is composed of three subunits; BchL, BchN and BchB. Forms a heterotetramer of two BchB and two BchN subunits. The cofactor is [4Fe-4S] cluster.

It carries out the reaction chlorophyllide a + oxidized 2[4Fe-4S]-[ferredoxin] + 2 ADP + 2 phosphate = protochlorophyllide a + reduced 2[4Fe-4S]-[ferredoxin] + 2 ATP + 2 H2O. It functions in the pathway porphyrin-containing compound metabolism; bacteriochlorophyll biosynthesis (light-independent). Functionally, component of the dark-operative protochlorophyllide reductase (DPOR) that uses Mg-ATP and reduced ferredoxin to reduce ring D of protochlorophyllide (Pchlide) to form chlorophyllide a (Chlide). This reaction is light-independent. The NB-protein (BchN-BchB) is the catalytic component of the complex. The sequence is that of Light-independent protochlorophyllide reductase subunit B from Cereibacter sphaeroides (strain ATCC 17029 / ATH 2.4.9) (Rhodobacter sphaeroides).